The primary structure comprises 558 residues: Dihydroxy-acid dehydratase (558 aa).

Cys-50 serves as a coordination point for [2Fe-2S] cluster. Asp-82 provides a ligand contact to Mg(2+). [2Fe-2S] cluster is bound at residue Cys-123. Positions 124 and 125 each coordinate Mg(2+). Lys-125 is modified (N6-carboxylysine). Cys-195 contacts [2Fe-2S] cluster. Glu-447 is a binding site for Mg(2+). Ser-472 acts as the Proton acceptor in catalysis.

Belongs to the IlvD/Edd family. As to quaternary structure, homodimer. It depends on [2Fe-2S] cluster as a cofactor. Mg(2+) serves as cofactor.

The catalysed reaction is (2R)-2,3-dihydroxy-3-methylbutanoate = 3-methyl-2-oxobutanoate + H2O. The enzyme catalyses (2R,3R)-2,3-dihydroxy-3-methylpentanoate = (S)-3-methyl-2-oxopentanoate + H2O. Its pathway is amino-acid biosynthesis; L-isoleucine biosynthesis; L-isoleucine from 2-oxobutanoate: step 3/4. The protein operates within amino-acid biosynthesis; L-valine biosynthesis; L-valine from pyruvate: step 3/4. In terms of biological role, functions in the biosynthesis of branched-chain amino acids. Catalyzes the dehydration of (2R,3R)-2,3-dihydroxy-3-methylpentanoate (2,3-dihydroxy-3-methylvalerate) into 2-oxo-3-methylpentanoate (2-oxo-3-methylvalerate) and of (2R)-2,3-dihydroxy-3-methylbutanoate (2,3-dihydroxyisovalerate) into 2-oxo-3-methylbutanoate (2-oxoisovalerate), the penultimate precursor to L-isoleucine and L-valine, respectively. The polypeptide is Dihydroxy-acid dehydratase (Saccharolobus islandicus (strain L.S.2.15 / Lassen #1) (Sulfolobus islandicus)).